The sequence spans 212 residues: Protein irg-1 (212 aa).

As to expression, expressed in the intestine.

Plays a role in innate immunity by conferring resistance to virulent strains of the Gram-negative bacterium P.aeruginosa via the zip-2 pathway. Can act independently of several immunity-related pathways including pmk-1 p38MAPK, dbl-1 TGF-beta, kgb-1 JNK and bar-1/beta-catenin pathways. The polypeptide is Protein irg-1 (Caenorhabditis elegans).